Reading from the N-terminus, the 150-residue chain is UPF0756 membrane protein PM0771 (150 aa).

Transmembrane regions (helical) follow at residues 12–34 (LVVL…AAIL), 52–72 (HGIT…IVSG), 79–99 (LAVF…LVAW), and 123–143 (ILGV…AGIL).

This sequence belongs to the UPF0756 family.

The protein resides in the cell membrane. The protein is UPF0756 membrane protein PM0771 of Pasteurella multocida (strain Pm70).